A 192-amino-acid chain; its full sequence is Peptidyl-tRNA hydrolase (192 aa).

Residue H17 participates in tRNA binding. Residue H22 is the Proton acceptor of the active site. Residues F68, N70, and N116 each coordinate tRNA.

The protein belongs to the PTH family. As to quaternary structure, monomer.

The protein localises to the cytoplasm. It catalyses the reaction an N-acyl-L-alpha-aminoacyl-tRNA + H2O = an N-acyl-L-amino acid + a tRNA + H(+). Hydrolyzes ribosome-free peptidyl-tRNAs (with 1 or more amino acids incorporated), which drop off the ribosome during protein synthesis, or as a result of ribosome stalling. Its function is as follows. Catalyzes the release of premature peptidyl moieties from peptidyl-tRNA molecules trapped in stalled 50S ribosomal subunits, and thus maintains levels of free tRNAs and 50S ribosomes. The chain is Peptidyl-tRNA hydrolase from Stenotrophomonas maltophilia (strain R551-3).